A 2109-amino-acid chain; its full sequence is MADSFGFTPMEVLLFGGESVQLLTSDMPIDVQWGFVHSTRCYALWKDDLIHLNPLLKYSQRIAKRWERLVSGFVGPVPLDKLLSLLAKLMRYCVNMGVSVQEIYLSDAIVSSSYMLHVSRSAGCVSFSWLYAKLSMFASCGKFWVGSSHHTAANMIEGSRAVNGPDVAISEMVEAFHLEVKSSLVVTVSLTPREKKILERELGFVPLYKQKSRAPRNHPVLAALREVMRQEYSASCNILNTKLKTLVVGAASREVNCYSSNPSVHYYFANKDSKDLVRTTLELLHSALATKYRNMESGERELMNNLKGCGYIVKRSVENAVYEVVSDKDVAEVLRYAQTVASTKKEAKKKPNTGKRKMVMSEATRRTIELHELSRIVAEEKKIPNHFHFDESDFASVGNFTQLVCEDVGYNFSVDAWLHLFEATGAQTAVGYMALPNELLFEHYPISDYYDYWEGVEKHGSLGGITISPLRNGQVVGMPTGVFQPVHFDKTSAGLGIPGSKMGAAERVICHMSDGLGNGYNHVKSDWQTLLKHPILSSSKYNFAVEVDLTGRYGCLATFRLTRVTGVKYVARTIKLRPEDRYVRVLDLLHIVRSIRLKGHAGLKEPYQYFPVYKREVDTPVSYCFSIAEKSLTVQNIANFIRHHIGGVSLVNKELVSAWRLNPQLVPSFAYAVYFYVVNLRGELDGMLQKLMKKGITWADRLKANVSAFLRDMVDPISFLWTWLFERRLVDQIFQDGTDVFYQMDRACVDEKALRLNDHIKITRDFLPADTLLPEGWSLDDWEKAPDSLKTLSAAASLPVECGAVNCVGKSFKSVRTLLPPSVVTSPVEQFFKSGGKFRDDAEFAELLSAHYRWQMDNSFCACQVCAALTGKTGSQVVECRWKAESMYTFSMSQTEVDDFRNEIKAQSIEKGNRFGEMLIGVHQKIPTQAFEVSVRLEYVKGGPGTGKSFLIRSLADPIRDLVVAPFIKLRSDYQNQRVGDELLSWDFHTPHKALDVTGKQIIFVDEFTAYDWRLLAVLAYRNHAHTIYLVGDEQQTGIQEGRGEGISILNKVDLSKVSTHVPIMNFRNPVRDVKVLNYLFGSRMVPMSSVEKGFSFGDVKEFSSLSNIPDTKIIHYSDETGEHMMPDYVRGVSKTTVRANQGSTYDNVVLPVLPSDLNLINSAELNLVALSRHRNKLTILLDNDGMNIGAVLKGMLEGVPEELERRDYIVGMYLGLHLPIKKEFFFPESEFAKSFRLMVAKYEAFVPYDSNLPTLVLQGDVVVLDIARVENDINDAFNCPDFYNLVSRPNNCLVVAISECLGVTLEKLDNLMQANAVTLDKYHAWLSKKSPSTWQDCRMFADALKVSMYVKVLSDKPYDLTYEVDGAGSSVTLHLVGKESDGHFIAAPLSPSLSTNERESGHDSKKPADDSDTFDAANLFADKGVSSADIEAFCAYLEKTLMATIMEYDLRLQSWANVVDDTDDFYQINISEFRQSTCFGKLLSALEVLKVDVSRKRFISDWLCKNLENKQFRWRWSSSVASTSSAGSNVDDDFVNMAGGKTDANVDPADVLRQSFMDYASEFVPILIAESPILMPLVEPEPILSKCMVPEFDAFLLIKEFDLDNGADEYQCAYLNESVANRVGDKFVSGVLDTDIISPLNLRGHPIAENVKYHSMCVAPAQIYFKRNQWQELQVQQARYLFRKVRNSPSSTQDSVARMVAQLFVSDCLVPNVADTFSASNLWRIMDKAMHDMVTKNYQGQMEEEFTRNAKLYRFQLKDIEKPLKDPETDLAKAGQGILAWSKEAHVKFMVAFRVLNDLLLKSLNSNVVYDNTMSETEFVGKINAAMNIVPDSAINGVIDAAACDSGQGVFTQLIERHIYAALGISDFFLDWYFSFREKYVMQSRYVRAHMSYVKTSGEPGTLLGNTILMGAMLNAMLRGTGPFCMAMKGDDGFKRQANLKINDQMLKLIKKETVLDFKLDLNVPITFCGYALSNGHLFPSVSRKLTKIAAHRFREYKHFCEYQESLRDWIKNLPKDPAVYADFLECNASLSCRNVDDVQRWLDAIISVSRIGREQFMMMFPIREVFMSLPPVEDSLGELSSTKVAVSIGDNVSNVVRKVARVDMKKF.

The Alphavirus-like MT domain occupies 209–421 (KQKSRAPRNH…FSVDAWLHLF (213 aa)). The region spanning 911-1063 (KGNRFGEMLI…DLSKVSTHVP (153 aa)) is the (+)RNA virus helicase ATP-binding domain. Positions 939–1181 (YVKGGPGTGK…SRHRNKLTIL (243 aa)) are helicase. Residues 1064-1214 (IMNFRNPVRD…ERRDYIVGMY (151 aa)) enclose the (+)RNA virus helicase C-terminal domain. The interval 1285-1388 (NLVSRPNNCL…KESDGHFIAA (104 aa)) is protease. A disordered region spans residues 1390 to 1411 (LSPSLSTNERESGHDSKKPADD). A compositionally biased stretch (basic and acidic residues) spans 1397–1410 (NERESGHDSKKPAD).

The protein belongs to the ssRNA positive-strand viruses RNA-directed RNA polymerase family. Autocatalytically cleaved by the cysteine protease.

The catalysed reaction is RNA(n) + a ribonucleoside 5'-triphosphate = RNA(n+1) + diphosphate. It catalyses the reaction ATP + H2O = ADP + phosphate + H(+). Is an RNA-dependent RNA polymerase active in viral RNA replication. Its function is as follows. Is a methyltransferase active in RNA capping and an RNA helicase. Methyltransferase displays a cytoplasmic capping enzyme activity. This function is necessary since all viral RNAs are synthesized in the cytoplasm, and host capping enzymes are restricted to the nucleus. Helicase region probably exhibits NTPase and RNA unwinding activities. Contains a cysteine protease activity responsible for autocatalytic processing of the 237 kDa protein (Potential). The polypeptide is Replicase (Beta macrocarpa (Beet)).